Here is a 181-residue protein sequence, read N- to C-terminus: Inner membrane-spanning protein YciB (181 aa).

5 helical membrane-spanning segments follow: residues 19–39, 50–70, 80–100, 118–138, and 148–168; these read FFDI…QLIA, MHLI…IFHD, IVYA…KPIL, LTWY…YVAF, and FKVF…VVYL.

Belongs to the YciB family.

Its subcellular location is the cell inner membrane. In terms of biological role, plays a role in cell envelope biogenesis, maintenance of cell envelope integrity and membrane homeostasis. In Shewanella amazonensis (strain ATCC BAA-1098 / SB2B), this protein is Inner membrane-spanning protein YciB.